Consider the following 264-residue polypeptide: Sexual differentiation protein ste4 (264 aa).

One can recognise an SAM domain in the interval 11–73; the sequence is WNNEAVCNWI…LSAIQSMKKQ (63 aa). The segment at 111-139 is leucine-zipper; sequence LEKRVEYLETENTKLVKTLNSLNSEFLQL. A Ras-associating domain is found at 176–264; it reads GSFDLEVNDS…PSFVLSRRSC (89 aa).

Homodimer or heterodimer with another leucine-zipper protein.

Its function is as follows. Essential for mating and meiosis. This Schizosaccharomyces pombe (strain 972 / ATCC 24843) (Fission yeast) protein is Sexual differentiation protein ste4 (ste4).